A 126-amino-acid chain; its full sequence is Holo-[acyl-carrier-protein] synthase (126 aa).

Mg(2+) is bound by residues aspartate 9 and glutamate 58.

This sequence belongs to the P-Pant transferase superfamily. AcpS family. Requires Mg(2+) as cofactor.

Its subcellular location is the cytoplasm. It carries out the reaction apo-[ACP] + CoA = holo-[ACP] + adenosine 3',5'-bisphosphate + H(+). In terms of biological role, transfers the 4'-phosphopantetheine moiety from coenzyme A to a Ser of acyl-carrier-protein. This is Holo-[acyl-carrier-protein] synthase from Escherichia coli O139:H28 (strain E24377A / ETEC).